The sequence spans 375 residues: Transmembrane protein 183 (375 aa).

Disordered regions lie at residues 1-21 (MARG…MPKR) and 94-128 (LDSS…PDGT). Positions 95 to 106 (DSSDEMDAQEES) are enriched in acidic residues. A helical transmembrane segment spans residues 299–319 (LNFIFIPIVMGMIFTLFTINV).

Belongs to the TMEM183 family.

It is found in the membrane. The polypeptide is Transmembrane protein 183 (Tmem183) (Mus musculus (Mouse)).